Consider the following 859-residue polypeptide: Envelope glycoprotein (859 aa).

The propeptide occupies 1 to 6 (MVSIAF). The Extracellular portion of the chain corresponds to 7–614 (YGGIPGGIST…KDLWSHIGNW (608 aa)). Residues Asn-40, Asn-112, Asn-141, Asn-148, Asn-186, Asn-214, Asn-233, Asn-244, Asn-340, Asn-368, Asn-399, Asn-406, and Asn-411 are each glycosylated (N-linked (GlcNAc...) asparagine; by host). A fusion peptide region spans residues 446–466 (FGISAIVAAIVAATAIAASAT). 2 N-linked (GlcNAc...) asparagine; by host glycosylation sites follow: Asn-483 and Asn-490. Residues 498–513 (LIERQIKILYAMILQT) are immunosuppression. N-linked (GlcNAc...) asparagine; by host glycans are attached at residues Asn-550 and Asn-557. Coiled-coil stretches lie at residues 576–624 (ILTT…SIIK) and 663–699 (KKFHHKHASREDTWDQAQHNIHLAGVTGGSGDKYYKQ). The chain crosses the membrane as a helical span at residues 615–635 (IPGLGASIIKYIVMFLLIYLL). Over 636–859 (LTSSPKILRA…TSHVSMPQYV (224 aa)) the chain is Cytoplasmic.

In terms of assembly, the mature envelope protein (Env) consists of a trimer of SU-TM heterodimers attached by noncovalent interactions or by a labile interchain disulfide bond. Specific enzymatic cleavages in vivo yield mature proteins. Envelope glycoproteins are synthesized as an inactive precursor that is N-glycosylated and processed likely by host cell furin or by a furin-like protease in the Golgi to yield the mature SU and TM proteins. The cleavage site between SU and TM requires the minimal sequence [KR]-X-[KR]-R.

It is found in the virion membrane. It localises to the host cell membrane. Functionally, the surface protein (SU) attaches the virus to the host cell by binding to its receptor. This interaction triggers the refolding of the transmembrane protein (TM) and is thought to activate its fusogenic potential by unmasking its fusion peptide. Fusion occurs at the host cell plasma membrane. Its function is as follows. The transmembrane protein (TM) acts as a class I viral fusion protein. Under the current model, the protein has at least 3 conformational states: pre-fusion native state, pre-hairpin intermediate state, and post-fusion hairpin state. During viral and target cell membrane fusion, the coiled coil regions (heptad repeats) assume a trimer-of-hairpins structure, positioning the fusion peptide in close proximity to the C-terminal region of the ectodomain. The formation of this structure appears to drive apposition and subsequent fusion of viral and target cell membranes. Membranes fusion leads to delivery of the nucleocapsid into the cytoplasm. The sequence is that of Envelope glycoprotein (env) from Equine infectious anemia virus (isolate 1369) (EIAV).